Reading from the N-terminus, the 371-residue chain is Bifunctional enzyme IspD/IspF (371 aa).

Residues 1–210 form a 2-C-methyl-D-erythritol 4-phosphate cytidylyltransferase region; it reads MSEISLIMLA…LDLPTPSFEI (210 aa). Residues 211-371 form a 2-C-methyl-D-erythritol 2,4-cyclodiphosphate synthase region; sequence FTGNGFDVHE…NLKYFDWTRL (161 aa). Residues D217 and H219 each contribute to the a divalent metal cation site. Residues 217–219 and 243–244 contribute to the 4-CDP-2-C-methyl-D-erythritol 2-phosphate site; these read DVH and HS. Position 251 (H251) interacts with a divalent metal cation. 4-CDP-2-C-methyl-D-erythritol 2-phosphate is bound by residues 265-267, 270-274, 341-344, F348, and R351; these read DIG, YPDTD, and TTTE.

It in the N-terminal section; belongs to the IspD/TarI cytidylyltransferase family. IspD subfamily. In the C-terminal section; belongs to the IspF family. A divalent metal cation is required as a cofactor.

It carries out the reaction 2-C-methyl-D-erythritol 4-phosphate + CTP + H(+) = 4-CDP-2-C-methyl-D-erythritol + diphosphate. It catalyses the reaction 4-CDP-2-C-methyl-D-erythritol 2-phosphate = 2-C-methyl-D-erythritol 2,4-cyclic diphosphate + CMP. It functions in the pathway isoprenoid biosynthesis; isopentenyl diphosphate biosynthesis via DXP pathway; isopentenyl diphosphate from 1-deoxy-D-xylulose 5-phosphate: step 2/6. Its pathway is isoprenoid biosynthesis; isopentenyl diphosphate biosynthesis via DXP pathway; isopentenyl diphosphate from 1-deoxy-D-xylulose 5-phosphate: step 4/6. Bifunctional enzyme that catalyzes the formation of 4-diphosphocytidyl-2-C-methyl-D-erythritol from CTP and 2-C-methyl-D-erythritol 4-phosphate (MEP) (IspD), and catalyzes the conversion of 4-diphosphocytidyl-2-C-methyl-D-erythritol 2-phosphate (CDP-ME2P) to 2-C-methyl-D-erythritol 2,4-cyclodiphosphate (ME-CPP) with a corresponding release of cytidine 5-monophosphate (CMP) (IspF). The sequence is that of Bifunctional enzyme IspD/IspF from Campylobacter jejuni subsp. jejuni serotype O:6 (strain 81116 / NCTC 11828).